Here is a 361-residue protein sequence, read N- to C-terminus: Hydroxycarboxylate dehydrogenase B (361 aa).

NAD(+) contacts are provided by residues His48, 122 to 124, 178 to 182, His234, Asn270, and 313 to 316; these read GRI, LLDYA, and GEWE.

The protein belongs to the LDH2/MDH2 oxidoreductase family.

It carries out the reaction 2-hydroxyglutarate + NADP(+) = 2-oxoglutarate + NADPH + H(+). The catalysed reaction is 2-hydroxyglutarate + NAD(+) = 2-oxoglutarate + NADH + H(+). It catalyses the reaction 3-phenyllactate + NADP(+) = 3-phenylpyruvate + NADPH + H(+). The enzyme catalyses 3-phenyllactate + NAD(+) = 3-phenylpyruvate + NADH + H(+). It carries out the reaction (2R)-2-hydroxy-3-(4-hydroxyphenyl)propanoate + NAD(+) = 3-(4-hydroxyphenyl)pyruvate + NADH + H(+). The catalysed reaction is (2R)-2-hydroxy-3-(4-hydroxyphenyl)propanoate + NADP(+) = 3-(4-hydroxyphenyl)pyruvate + NADPH + H(+). It catalyses the reaction (2R)-3-(3,4-dihydroxyphenyl)lactate + NADP(+) = 3-(3,4-dihydroxyphenyl)pyruvate + NADPH + H(+). The enzyme catalyses (2R)-3-(3,4-dihydroxyphenyl)lactate + NAD(+) = 3-(3,4-dihydroxyphenyl)pyruvate + NADH + H(+). Functionally, catalyzes the NAD(P)H-dependent reduction of 2-oxoglutarate, phenylpyruvate and (4-hydroxyphenyl)pyruvate, leading to the respective 2-hydroxycarboxylate in vitro. Shows a preference for NADPH over NADH as a redox partner. Do not catalyze the reverse reactions. The protein is Hydroxycarboxylate dehydrogenase B of Escherichia coli (strain K12).